A 395-amino-acid chain; its full sequence is Elongation factor Tu (395 aa).

The region spanning 10-204 (KPHCNIGTIG…TVDSYIPDPQ (195 aa)) is the tr-type G domain. Residues 19–26 (GHVDHGKT) form a G1 region. 19–26 (GHVDHGKT) serves as a coordination point for GTP. Thr26 contacts Mg(2+). Residues 61 to 65 (GITIS) form a G2 region. A G3 region spans residues 82 to 85 (DCPG). GTP-binding positions include 82 to 86 (DCPGH) and 137 to 140 (NKCD). A G4 region spans residues 137 to 140 (NKCD). Residues 173 to 175 (SAL) are G5.

Belongs to the TRAFAC class translation factor GTPase superfamily. Classic translation factor GTPase family. EF-Tu/EF-1A subfamily. As to quaternary structure, monomer.

The protein localises to the cytoplasm. It carries out the reaction GTP + H2O = GDP + phosphate + H(+). In terms of biological role, GTP hydrolase that promotes the GTP-dependent binding of aminoacyl-tRNA to the A-site of ribosomes during protein biosynthesis. In Agathobacter rectalis (strain ATCC 33656 / DSM 3377 / JCM 17463 / KCTC 5835 / VPI 0990) (Eubacterium rectale), this protein is Elongation factor Tu.